We begin with the raw amino-acid sequence, 160 residues long: MKNIVDDKILLTQQKLEEIEKELEHLINVERVNVIQEIKDARSQGDLSENAEYDVAREKQGIIESRIRELETIISKAKIIKADLGSSRVSIGSKVSLENVESGEIQTFQIVSSIDADPFKSKISNFSPIAQALLGQHQGDEVEVDVNEKYSVRILEVINE.

Residues 3 to 84 are a coiled coil; sequence NIVDDKILLT…SKAKIIKADL (82 aa).

Belongs to the GreA/GreB family.

Functionally, necessary for efficient RNA polymerase transcription elongation past template-encoded arresting sites. The arresting sites in DNA have the property of trapping a certain fraction of elongating RNA polymerases that pass through, resulting in locked ternary complexes. Cleavage of the nascent transcript by cleavage factors such as GreA or GreB allows the resumption of elongation from the new 3'terminus. GreA releases sequences of 2 to 3 nucleotides. This is Transcription elongation factor GreA from Mesomycoplasma hyopneumoniae (strain J / ATCC 25934 / NCTC 10110) (Mycoplasma hyopneumoniae).